Here is a 180-residue protein sequence, read N- to C-terminus: Insertion element IS1296 uncharacterized 21.4 kDa protein (180 aa).

It belongs to the IS150/IS1296 orfA family.

The protein is Insertion element IS1296 uncharacterized 21.4 kDa protein of Mycoplasma mycoides subsp. mycoides SC.